The chain runs to 83 residues: Apolipoprotein C-I (83 aa).

A signal peptide spans 1-26 (MRLILSLPVLAVVLAMVLEGPAPAQA).

This sequence belongs to the apolipoprotein C1 family.

It localises to the secreted. Inhibitor of lipoprotein binding to the low density lipoprotein (LDL) receptor, LDL receptor-related protein, and very low density lipoprotein (VLDL) receptor. Associates with high density lipoproteins (HDL) and the triacylglycerol-rich lipoproteins in the plasma and makes up about 10% of the protein of the VLDL and 2% of that of HDL. Appears to interfere directly with fatty acid uptake and is also the major plasma inhibitor of cholesteryl ester transfer protein (CETP). Binds free fatty acids and reduces their intracellular esterification. Modulates the interaction of APOE with beta-migrating VLDL and inhibits binding of beta-VLDL to the LDL receptor-related protein. This Rousettus aegyptiacus (Egyptian fruit bat) protein is Apolipoprotein C-I (APOC1).